An 86-amino-acid polypeptide reads, in one-letter code: Omega-theraphotoxin-Hhn1b (86 aa).

A signal peptide spans 1 to 21; it reads MKSIVFVALFGLALLAVVCSA. The propeptide occupies 22-50; the sequence is SEDAHKELLKEVVRAMVVDKTDAVQAEER. Disulfide bonds link Cys-52–Cys-66, Cys-59–Cys-71, and Cys-65–Cys-78.

The protein belongs to the neurotoxin 10 (Hwtx-1) family. 17 (Hntx-9) subfamily. As to expression, expressed by the venom gland.

The protein localises to the secreted. In terms of biological role, ion channel inhibitor. The chain is Omega-theraphotoxin-Hhn1b from Cyriopagopus hainanus (Chinese bird spider).